We begin with the raw amino-acid sequence, 278 residues long: Thiazole synthase (278 aa).

Catalysis depends on Lys-107, which acts as the Schiff-base intermediate with DXP. Residues Gly-168, 194-195 (AG), and 216-217 (AS) contribute to the 1-deoxy-D-xylulose 5-phosphate site.

Belongs to the ThiG family. Homotetramer. Forms heterodimers with either ThiH or ThiS.

It is found in the cytoplasm. It catalyses the reaction [ThiS sulfur-carrier protein]-C-terminal-Gly-aminoethanethioate + 2-iminoacetate + 1-deoxy-D-xylulose 5-phosphate = [ThiS sulfur-carrier protein]-C-terminal Gly-Gly + 2-[(2R,5Z)-2-carboxy-4-methylthiazol-5(2H)-ylidene]ethyl phosphate + 2 H2O + H(+). The protein operates within cofactor biosynthesis; thiamine diphosphate biosynthesis. Its function is as follows. Catalyzes the rearrangement of 1-deoxy-D-xylulose 5-phosphate (DXP) to produce the thiazole phosphate moiety of thiamine. Sulfur is provided by the thiocarboxylate moiety of the carrier protein ThiS. In vitro, sulfur can be provided by H(2)S. The protein is Thiazole synthase of Corynebacterium jeikeium (strain K411).